A 158-amino-acid polypeptide reads, in one-letter code: SsrA-binding protein (158 aa).

It belongs to the SmpB family.

It is found in the cytoplasm. Required for rescue of stalled ribosomes mediated by trans-translation. Binds to transfer-messenger RNA (tmRNA), required for stable association of tmRNA with ribosomes. tmRNA and SmpB together mimic tRNA shape, replacing the anticodon stem-loop with SmpB. tmRNA is encoded by the ssrA gene; the 2 termini fold to resemble tRNA(Ala) and it encodes a 'tag peptide', a short internal open reading frame. During trans-translation Ala-aminoacylated tmRNA acts like a tRNA, entering the A-site of stalled ribosomes, displacing the stalled mRNA. The ribosome then switches to translate the ORF on the tmRNA; the nascent peptide is terminated with the 'tag peptide' encoded by the tmRNA and targeted for degradation. The ribosome is freed to recommence translation, which seems to be the essential function of trans-translation. This is SsrA-binding protein from Pseudoalteromonas atlantica (strain T6c / ATCC BAA-1087).